Reading from the N-terminus, the 214-residue chain is Glucose-6-phosphate isomerase (214 aa).

Fe cation contacts are provided by His92, His94, Glu101, and His140.

It belongs to the archaeal-type GPI family. In terms of assembly, homodimer.

It is found in the cytoplasm. The enzyme catalyses alpha-D-glucose 6-phosphate = beta-D-fructose 6-phosphate. The protein operates within carbohydrate degradation; glycolysis; D-glyceraldehyde 3-phosphate and glycerone phosphate from D-glucose: step 2/4. The chain is Glucose-6-phosphate isomerase from Sinorhizobium medicae (strain WSM419) (Ensifer medicae).